Here is a 61-residue protein sequence, read N- to C-terminus: Short neurotoxin 2 (61 aa).

Cystine bridges form between Cys-3–Cys-23, Cys-17–Cys-40, Cys-42–Cys-53, and Cys-54–Cys-59.

This sequence belongs to the three-finger toxin family. Short-chain subfamily. Type I alpha-neurotoxin sub-subfamily. Expressed by the venom gland.

It is found in the secreted. Functionally, binds to muscle nicotinic acetylcholine receptor (nAChR) and inhibit acetylcholine from binding to the receptor, thereby impairing neuromuscular transmission. The protein is Short neurotoxin 2 of Naja annulifera (Banded Egyptian cobra).